Reading from the N-terminus, the 303-residue chain is Kanosamine kinase (303 aa).

This sequence belongs to the ROK (NagC/XylR) family.

The catalysed reaction is kanosamine + ATP = D-kanosamine 6-phosphate + ADP + H(+). The protein operates within antibiotic biosynthesis; rifamycin B biosynthesis. Its activity is regulated as follows. Inhibited by Zn(2+), Cu(2+), and Fe(2+). Its function is as follows. Involved in the biosynthesis of 3-amino-5-hydroxybenzoate (AHBA), a compound that then serves as the starter unit for the assembly of a polyketide during the biosynthesis of rifamycin B and other ansamycin antibiotics. Catalyzes only the phosphorylation of kanosamine to yield kanosamine 6-phosphate. The chain is Kanosamine kinase (rifN) from Amycolatopsis mediterranei (strain S699) (Nocardia mediterranei).